The following is a 292-amino-acid chain: Zinc finger protein OZF (292 aa).

10 C2H2-type zinc fingers span residues 16 to 38 (FACKVCGKVFSHKSNLTEHEHFH), 44 to 66 (FECNECGKAFSQKQYVIKHQNTH), 72 to 94 (FECNECGKSFSQKENLLTHQKIH), 100 to 122 (FECKDCGKAFIQKSNLIRHQRTH), 128 to 150 (FVCKECGKTFSGKSNLTEHEKIH), 156 to 178 (FKCSECGTAFGQKKYLIKHQNIH), 184 to 206 (YECNECGKAFSQRTSLIVHVRIH), 212 to 234 (YECNVCGKAFSQSSSLTVHVRSH), 240 to 262 (YGCNECGKAFSQFSTLALHLRIH), and 268 to 290 (YQCSECGKAFSQKSHHIRHQKIH). Residues Lys-28, Lys-51, and Lys-56 each participate in a glycyl lysine isopeptide (Lys-Gly) (interchain with G-Cter in SUMO2) cross-link. Residues Lys-157 and Lys-169 each participate in a glycyl lysine isopeptide (Lys-Gly) (interchain with G-Cter in SUMO) cross-link. Residue Lys-173 forms a Glycyl lysine isopeptide (Lys-Gly) (interchain with G-Cter in SUMO2) linkage. The segment at 212 to 292 (YECNVCGKAF…HIRHQKIHTH (81 aa)) is interaction with TERF2IP.

This sequence belongs to the krueppel C2H2-type zinc-finger protein family. As to quaternary structure, binds DNA. Interacts with SUMO conjugating enzyme UBC9/UBE2I. Interacts with the telomeric protein TERF2IP. Sumoylated. As to expression, liver, skeletal and heart muscle, mammary cells. Very low levels in brain, lung, placenta and kidney. Strongly overexpressed in many pancreas and colorectal cancers. Increased gene copy numbers are detected in 3 of 12 tumor cell lines and 2 of 12 primary pancreatic carcinomas. Overexpressed in 80% of colorectal cancers.

Its subcellular location is the nucleus. In Homo sapiens (Human), this protein is Zinc finger protein OZF (ZNF146).